The sequence spans 151 residues: Methylglyoxal synthase (151 aa).

Residues 6-151 (RVMPAHKHIA…DYDAYLAERV (146 aa)) enclose the MGS-like domain. Substrate-binding positions include histidine 19, lysine 23, 45 to 48 (TGTT), and 65 to 66 (SG). The active-site Proton donor/acceptor is the aspartate 71. Histidine 98 contributes to the substrate binding site.

Belongs to the methylglyoxal synthase family.

The catalysed reaction is dihydroxyacetone phosphate = methylglyoxal + phosphate. Catalyzes the formation of methylglyoxal from dihydroxyacetone phosphate. The polypeptide is Methylglyoxal synthase (Aliivibrio fischeri (strain MJ11) (Vibrio fischeri)).